Reading from the N-terminus, the 127-residue chain is Phosphoribosyl-ATP pyrophosphatase (127 aa).

It belongs to the PRA-PH family.

It is found in the cytoplasm. It catalyses the reaction 1-(5-phospho-beta-D-ribosyl)-ATP + H2O = 1-(5-phospho-beta-D-ribosyl)-5'-AMP + diphosphate + H(+). It functions in the pathway amino-acid biosynthesis; L-histidine biosynthesis; L-histidine from 5-phospho-alpha-D-ribose 1-diphosphate: step 2/9. This chain is Phosphoribosyl-ATP pyrophosphatase, found in Polaromonas sp. (strain JS666 / ATCC BAA-500).